The sequence spans 92 residues: Probable Fe(2+)-trafficking protein (92 aa).

This sequence belongs to the Fe(2+)-trafficking protein family.

Functionally, could be a mediator in iron transactions between iron acquisition and iron-requiring processes, such as synthesis and/or repair of Fe-S clusters in biosynthetic enzymes. This Shewanella sp. (strain W3-18-1) protein is Probable Fe(2+)-trafficking protein.